The chain runs to 492 residues: Trehalose-6-phosphate synthase (492 aa).

R25 serves as a coordination point for D-glucose 6-phosphate. A UDP-alpha-D-glucose-binding site is contributed by 45 to 46 (GG). D-glucose 6-phosphate is bound by residues Y101 and D155. UDP-alpha-D-glucose-binding residues include R297 and K302. A D-glucose 6-phosphate-binding site is contributed by R335. 400–404 (LVAKE) is a UDP-alpha-D-glucose binding site.

It belongs to the glycosyltransferase 20 family. In terms of assembly, homotetramer.

The catalysed reaction is ADP-alpha-D-glucose + D-glucose 6-phosphate = alpha,alpha-trehalose 6-phosphate + ADP + H(+). It catalyses the reaction CDP-alpha-D-glucose + D-glucose 6-phosphate = alpha,alpha-trehalose 6-phosphate + CDP + H(+). It carries out the reaction GDP-alpha-D-glucose + D-glucose 6-phosphate = alpha,alpha-trehalose 6-phosphate + GDP + H(+). The enzyme catalyses TDP-alpha-D-glucose + D-glucose 6-phosphate = 5-methyl-UDP + alpha,alpha-trehalose 6-phosphate + H(+). The catalysed reaction is D-glucose 6-phosphate + UDP-alpha-D-glucose = alpha,alpha-trehalose 6-phosphate + UDP + H(+). Its pathway is glycan biosynthesis; trehalose biosynthesis. Its function is as follows. Probably involved in the osmoprotection via the biosynthesis of trehalose and in the production of glycogen and alpha-glucan via the TreS-Pep2 branch involved in the biosynthesis of maltose-1-phosphate (M1P). Catalyzes the transfer of glucose from UDP-glucose (UDP-Glc) to D-glucose 6-phosphate (Glc-6-P) to form trehalose-6-phosphate. Probably also able to use ADP-Glc, CDP-Glc, GDP-Glc and TDP-Glc as glucosyl donors. The sequence is that of Trehalose-6-phosphate synthase from Mycobacterium avium (strain 104).